The sequence spans 440 residues: Protein dumpy-20 (440 aa).

The tract at residues 96 to 119 (ILSDPSLHGSNSSSSTSDVGSSVD) is disordered. Positions 98 to 119 (SDPSLHGSNSSSSTSDVGSSVD) are enriched in low complexity. BED-type zinc fingers lie at residues 137–186 (PTEN…YQKV) and 350–399 (KTEH…YNDV). 8 residues coordinate Zn(2+): Cys156, Cys159, His174, His179, Cys369, Cys372, His387, and His392.

Functionally, may be directly or indirectly involved in cuticle function. The sequence is that of Protein dumpy-20 (dpy-20) from Caenorhabditis elegans.